A 386-amino-acid chain; its full sequence is Alanine racemase (386 aa).

The Proton acceptor; specific for D-alanine role is filled by lysine 38. Lysine 38 is modified (N6-(pyridoxal phosphate)lysine). Arginine 136 lines the substrate pocket. The Proton acceptor; specific for L-alanine role is filled by tyrosine 267. Substrate is bound at residue methionine 315.

Belongs to the alanine racemase family. It depends on pyridoxal 5'-phosphate as a cofactor.

It carries out the reaction L-alanine = D-alanine. The protein operates within amino-acid biosynthesis; D-alanine biosynthesis; D-alanine from L-alanine: step 1/1. Catalyzes the interconversion of L-alanine and D-alanine. May also act on other amino acids. This is Alanine racemase (alr) from Clostridium perfringens (strain SM101 / Type A).